Consider the following 551-residue polypeptide: Adenylosuccinate synthetase (551 aa).

Residues 131 to 137 and 159 to 161 contribute to the GTP site; these read GDEGKGK and GHT. Catalysis depends on aspartate 132, which acts as the Proton acceptor. 2 residues coordinate Mg(2+): aspartate 132 and glycine 159. Residues 132-135, 157-160, threonine 248, arginine 262, asparagine 339, threonine 354, and arginine 418 each bind IMP; these read DEGK and NAGH. Histidine 160 acts as the Proton donor in catalysis. Substrate is bound at residue 414-420; that stretch reads TTTGRAR. GTP is bound by residues arginine 420, 446–448, and 528–530; these read KLD and GVG.

Belongs to the adenylosuccinate synthetase family. In terms of assembly, homodimer. Mg(2+) is required as a cofactor.

Its subcellular location is the cytoplasm. The enzyme catalyses IMP + L-aspartate + GTP = N(6)-(1,2-dicarboxyethyl)-AMP + GDP + phosphate + 2 H(+). Its pathway is purine metabolism; AMP biosynthesis via de novo pathway; AMP from IMP: step 1/2. Its function is as follows. Plays an important role in the de novo pathway and in the salvage pathway of purine nucleotide biosynthesis. Catalyzes the first committed step in the biosynthesis of AMP from IMP. This chain is Adenylosuccinate synthetase, found in Phytophthora infestans (strain T30-4) (Potato late blight agent).